A 943-amino-acid polypeptide reads, in one-letter code: Lysine-specific demethylase JMJ21 (943 aa).

An F-box domain is found at 14-60 (LGSLSVLPDETICVLLEYLAPRDIAHLACVSSVMYILCNEEPLWMSL). One can recognise a JmjC domain in the interval 216–379 (EAAPELLKDY…FVCLDMAPGY (164 aa)). Residues H262, D264, and H347 each contribute to the Fe cation site. Positions 396 to 410 (NSEDLEEETHDEEDN) are enriched in acidic residues. Positions 396 to 438 (NSEDLEEETHDEEDNTLSYSDLTRKEKRTRMNGGGETENREED) are disordered.

The protein belongs to the JARID1 histone demethylase family. It depends on Fe(2+) as a cofactor. In terms of tissue distribution, mostly expressed in leaves, and, to a lower extent, in inflorescences, roots, siliques and stems.

Its subcellular location is the nucleus. Functionally, may function as histone H3 lysine demethylase and be involved in regulation of gene expression. The polypeptide is Lysine-specific demethylase JMJ21 (Arabidopsis thaliana (Mouse-ear cress)).